Reading from the N-terminus, the 155-residue chain is Secreted RxLR effector protein 38 (155 aa).

The first 17 residues, 1–17, serve as a signal peptide directing secretion; that stretch reads MHLIYIVMAATATTLHA. Residues 49–64 carry the RxLR-dEER motif; the sequence is RFLRGAYEDVHREEER.

Belongs to the RxLR effector family.

It is found in the secreted. The protein resides in the host nucleus. The protein localises to the host cytoplasm. In terms of biological role, secreted effector that completely suppresses the host cell death induced by cell death-inducing proteins. The polypeptide is Secreted RxLR effector protein 38 (Plasmopara viticola (Downy mildew of grapevine)).